We begin with the raw amino-acid sequence, 369 residues long: Homoserine O-succinyltransferase (369 aa).

Positions 49 to 328 (NAVFICHALT…RFDSTQSARM (280 aa)) constitute an AB hydrolase-1 domain. Serine 154 functions as the Nucleophile in the catalytic mechanism. Arginine 224 contacts substrate. Active-site residues include aspartate 317 and histidine 350. Aspartate 351 serves as a coordination point for substrate.

This sequence belongs to the AB hydrolase superfamily. MetX family. In terms of assembly, homodimer.

The protein resides in the cytoplasm. The enzyme catalyses L-homoserine + succinyl-CoA = O-succinyl-L-homoserine + CoA. It participates in amino-acid biosynthesis; L-methionine biosynthesis via de novo pathway; O-succinyl-L-homoserine from L-homoserine: step 1/1. Its function is as follows. Transfers a succinyl group from succinyl-CoA to L-homoserine, forming succinyl-L-homoserine. This Nocardioides sp. (strain ATCC BAA-499 / JS614) protein is Homoserine O-succinyltransferase.